A 483-amino-acid chain; its full sequence is Protein P55 (483 aa).

Residues 342–359 traverse the membrane as a helical segment; that stretch reads LTPVMALIIILVYYSIYG.

Its subcellular location is the host membrane. The polypeptide is Protein P55 (Vitis vinifera (Grape)).